The following is a 115-amino-acid chain: Selenoprotein K homolog (115 aa).

Residues 29–49 (FIWGILNQITFFFSTLIGGTV) form a helical membrane-spanning segment. The disordered stretch occupies residues 48 to 115 (TVEPRRRPNN…NSASGSUGPK (68 aa)). The span at 58–84 (QGGGRRLAGFDGNGNVTGGSGVGGSGP) shows a compositional bias: gly residues. Over residues 104–115 (ACNSASGSUGPK) the composition is skewed to polar residues. Residue Sec112 is a non-standard amino acid, selenocysteine.

The protein belongs to the selenoprotein K family.

The protein localises to the membrane. In Dictyostelium discoideum (Social amoeba), this protein is Selenoprotein K homolog (selk).